The following is a 277-amino-acid chain: Phosphate import ATP-binding protein PstB 2 (277 aa).

Residues 31–272 (IEVPGLNLFY…PAKKQTEDYI (242 aa)) form the ABC transporter domain. An ATP-binding site is contributed by 63-70 (GPSGCGKS).

This sequence belongs to the ABC transporter superfamily. Phosphate importer (TC 3.A.1.7) family. The complex is composed of two ATP-binding proteins (PstB), two transmembrane proteins (PstC and PstA) and a solute-binding protein (PstS).

The protein localises to the cell inner membrane. The enzyme catalyses phosphate(out) + ATP + H2O = ADP + 2 phosphate(in) + H(+). Part of the ABC transporter complex PstSACB involved in phosphate import. Responsible for energy coupling to the transport system. This is Phosphate import ATP-binding protein PstB 2 from Pseudomonas savastanoi pv. phaseolicola (strain 1448A / Race 6) (Pseudomonas syringae pv. phaseolicola (strain 1448A / Race 6)).